Consider the following 221-residue polypeptide: PKHD-type hydroxylase A9601_13531 (221 aa).

Residues 80 to 174 enclose the Fe2OG dioxygenase domain; sequence LIHGIMFTKS…RIVCVGWIES (95 aa). Fe cation contacts are provided by His-98, Asp-100, and His-155. Arg-165 lines the 2-oxoglutarate pocket.

Requires Fe(2+) as cofactor. The cofactor is L-ascorbate.

In Prochlorococcus marinus (strain AS9601), this protein is PKHD-type hydroxylase A9601_13531.